The following is a 142-amino-acid chain: Class II hydrophobin 7 (142 aa).

The N-terminal stretch at 1–16 (MKFLTVAIVLAAAASA) is a signal peptide. Intrachain disulfides connect C73–C123, C84–C114, C85–C97, and C124–C135.

Belongs to the cerato-ulmin hydrophobin family. As to quaternary structure, homodimer. Homodimers further self-assemble to form highly ordered films at water-air interfaces through intermolecular interactions.

It localises to the secreted. Its subcellular location is the cell wall. In terms of biological role, aerial growth, conidiation, and dispersal of filamentous fungi in the environment rely upon a capability of their secreting small amphipathic proteins called hydrophobins (HPBs) with low sequence identity. Class I can self-assemble into an outermost layer of rodlet bundles on aerial cell surfaces, conferring cellular hydrophobicity that supports fungal growth, development and dispersal; whereas Class II form highly ordered films at water-air interfaces through intermolecular interactions but contribute nothing to the rodlet structure. The protein is Class II hydrophobin 7 of Trichoderma asperellum (strain ATCC 204424 / CBS 433.97 / NBRC 101777).